A 464-amino-acid polypeptide reads, in one-letter code: Argininosuccinate lyase (464 aa).

Position 2 is an N-acetylalanine (alanine 2). The residue at position 7 (lysine 7) is an N6-acetyllysine. Serine 27 lines the 2-(N(omega)-L-arginino)succinate pocket. Position 69 is an N6-acetyllysine (lysine 69). The 2-(N(omega)-L-arginino)succinate site is built by asparagine 114 and threonine 159. Histidine 160 serves as the catalytic Proton acceptor. Serine 281 acts as the Proton donor in catalysis. At lysine 288 the chain carries N6-acetyllysine. Residues asparagine 289, tyrosine 321, glutamine 326, and lysine 329 each contribute to the 2-(N(omega)-L-arginino)succinate site.

Belongs to the lyase 1 family. Argininosuccinate lyase subfamily. Homotetramer. Forms tissue-specific complexes with ASS1, SLC7A1, HSP90AA1 and nitric oxide synthase NOS1, NOS2 or NOS3; the complex maintenance is independent of ASL catalytic function. Acetylation modifies enzyme activity in response to alterations of extracellular nutrient availability. Acetylation increased with trichostin A (TSA) or with nicotinamide (NAM). Glucose increases acetylation by about a factor of 3 with decreasing enzyme activity. Acetylation on Lys-288 is decreased on the addition of extra amino acids resulting in activation of enzyme activity.

The enzyme catalyses 2-(N(omega)-L-arginino)succinate = fumarate + L-arginine. Its pathway is amino-acid biosynthesis; L-arginine biosynthesis; L-arginine from L-ornithine and carbamoyl phosphate: step 3/3. It participates in nitrogen metabolism; urea cycle; L-arginine and fumarate from (N(omega)-L-arginino)succinate: step 1/1. Enzyme activity is regulated by acetylation. In terms of biological role, catalyzes the reversible cleavage of L-argininosuccinate to fumarate and L-arginine, an intermediate step reaction in the urea cycle mostly providing for hepatic nitrogen detoxification into excretable urea as well as de novo L-arginine synthesis in nonhepatic tissues. Essential regulator of intracellular and extracellular L-arginine pools. As part of citrulline-nitric oxide cycle, forms tissue-specific multiprotein complexes with argininosuccinate synthase ASS1, transport protein SLC7A1 and nitric oxide synthase NOS1, NOS2 or NOS3, allowing for cell-autonomous L-arginine synthesis while channeling extracellular L-arginine to nitric oxide synthesis pathway. The sequence is that of Argininosuccinate lyase (ASL) from Macaca fascicularis (Crab-eating macaque).